Consider the following 358-residue polypeptide: DNA replication and repair protein RecF (358 aa).

30–37 (GNNGSGKT) is a binding site for ATP.

Belongs to the RecF family.

The protein localises to the cytoplasm. In terms of biological role, the RecF protein is involved in DNA metabolism; it is required for DNA replication and normal SOS inducibility. RecF binds preferentially to single-stranded, linear DNA. It also seems to bind ATP. The polypeptide is DNA replication and repair protein RecF (Histophilus somni (strain 2336) (Haemophilus somnus)).